The primary structure comprises 126 residues: Large ribosomal subunit protein bL17 (126 aa).

Belongs to the bacterial ribosomal protein bL17 family. As to quaternary structure, part of the 50S ribosomal subunit. Contacts protein L32.

In Lawsonia intracellularis (strain PHE/MN1-00), this protein is Large ribosomal subunit protein bL17.